The following is a 715-amino-acid chain: Polyribonucleotide nucleotidyltransferase (715 aa).

Residues Asp485 and Asp491 each contribute to the Mg(2+) site. The region spanning 552-611 (PRIHTMKIDPKKIKDVIGKGGAVIRALTEETGTSIDIDDDGTVKIAATDNNAAKAVMARI) is the KH domain. Positions 621–689 (NAIYKGKVTR…RQNRIRLTMK (69 aa)) constitute an S1 motif domain. The disordered stretch occupies residues 695–715 (TPVAENVTEEAEVSSEQQAEI).

The protein belongs to the polyribonucleotide nucleotidyltransferase family. As to quaternary structure, component of the RNA degradosome, which is a multiprotein complex involved in RNA processing and mRNA degradation. The cofactor is Mg(2+).

It is found in the cytoplasm. It carries out the reaction RNA(n+1) + phosphate = RNA(n) + a ribonucleoside 5'-diphosphate. Involved in mRNA degradation. Catalyzes the phosphorolysis of single-stranded polyribonucleotides processively in the 3'- to 5'-direction. The sequence is that of Polyribonucleotide nucleotidyltransferase from Actinobacillus pleuropneumoniae serotype 3 (strain JL03).